A 238-amino-acid chain; its full sequence is MTKLSVNINKVATLRNARGGNNPDVVKVALDCEAFGAEGITVHPRPDERHIRRSDVYELRPLLTTEFNIEGYPSPEFVDLVLKVKPHQVTLVPDAPDQITSNAGWDTKTNLSFLTELMDTFGQAGIRTSIFVGTDKEMIEYAAKAGADRVELYTEPYATMYPRNPEAAIAPFIEAAKVTRSLGMGLNAGHDLSLVNLKYMHTHIPWLDEVSIGHALISDALYMGLKQTIEEYKNCLRS.

The 3-amino-2-oxopropyl phosphate site is built by asparagine 7 and arginine 18. Catalysis depends on histidine 43, which acts as the Proton acceptor. 1-deoxy-D-xylulose 5-phosphate-binding residues include arginine 45 and histidine 50. Glutamate 70 acts as the Proton acceptor in catalysis. Threonine 100 provides a ligand contact to 1-deoxy-D-xylulose 5-phosphate. Residue histidine 190 is the Proton donor of the active site. 3-amino-2-oxopropyl phosphate contacts are provided by residues aspartate 191 and 213-214 (GH).

This sequence belongs to the PNP synthase family. Homooctamer; tetramer of dimers.

It is found in the cytoplasm. The catalysed reaction is 3-amino-2-oxopropyl phosphate + 1-deoxy-D-xylulose 5-phosphate = pyridoxine 5'-phosphate + phosphate + 2 H2O + H(+). Its pathway is cofactor biosynthesis; pyridoxine 5'-phosphate biosynthesis; pyridoxine 5'-phosphate from D-erythrose 4-phosphate: step 5/5. Its function is as follows. Catalyzes the complicated ring closure reaction between the two acyclic compounds 1-deoxy-D-xylulose-5-phosphate (DXP) and 3-amino-2-oxopropyl phosphate (1-amino-acetone-3-phosphate or AAP) to form pyridoxine 5'-phosphate (PNP) and inorganic phosphate. This chain is Pyridoxine 5'-phosphate synthase, found in Phocaeicola vulgatus (strain ATCC 8482 / DSM 1447 / JCM 5826 / CCUG 4940 / NBRC 14291 / NCTC 11154) (Bacteroides vulgatus).